A 210-amino-acid chain; its full sequence is Probable septum site-determining protein MinC (210 aa).

Belongs to the MinC family. Interacts with MinD and FtsZ.

Its function is as follows. Cell division inhibitor that blocks the formation of polar Z ring septums. Rapidly oscillates between the poles of the cell to destabilize FtsZ filaments that have formed before they mature into polar Z rings. Prevents FtsZ polymerization. The protein is Probable septum site-determining protein MinC of Clostridium novyi (strain NT).